We begin with the raw amino-acid sequence, 190 residues long: MRAFKVKRDTNETKIHLELNIDGTGKYSINTGIPFFNHVLSSFAKHGAFDVILDVLGDLEIDDHHTVEDTGIVLGKAFESIEKNNIKRFGFAIIPMDEAKATVTIDIGGRPYLVGKYNPNTEKIGNFSTENVVHFFESFSNNAKVNMHFEVTGENEHHKVEALFKAFGIAMDMATQPDERKGIVSTKGII.

This sequence belongs to the imidazoleglycerol-phosphate dehydratase family.

It is found in the cytoplasm. It catalyses the reaction D-erythro-1-(imidazol-4-yl)glycerol 3-phosphate = 3-(imidazol-4-yl)-2-oxopropyl phosphate + H2O. The protein operates within amino-acid biosynthesis; L-histidine biosynthesis; L-histidine from 5-phospho-alpha-D-ribose 1-diphosphate: step 6/9. This is Imidazoleglycerol-phosphate dehydratase from Methanococcus vannielii (strain ATCC 35089 / DSM 1224 / JCM 13029 / OCM 148 / SB).